A 185-amino-acid polypeptide reads, in one-letter code: Ribosome-recycling factor (185 aa).

Residues 143–163 (EKEKLISEDDNKKGMDDIQKE) are disordered.

The protein belongs to the RRF family.

Its subcellular location is the cytoplasm. In terms of biological role, responsible for the release of ribosomes from messenger RNA at the termination of protein biosynthesis. May increase the efficiency of translation by recycling ribosomes from one round of translation to another. The chain is Ribosome-recycling factor from Syntrophomonas wolfei subsp. wolfei (strain DSM 2245B / Goettingen).